Consider the following 185-residue polypeptide: Ribosome-recycling factor (185 aa).

The protein belongs to the RRF family.

Its subcellular location is the cytoplasm. Responsible for the release of ribosomes from messenger RNA at the termination of protein biosynthesis. May increase the efficiency of translation by recycling ribosomes from one round of translation to another. The protein is Ribosome-recycling factor of Erwinia tasmaniensis (strain DSM 17950 / CFBP 7177 / CIP 109463 / NCPPB 4357 / Et1/99).